The following is a 293-amino-acid chain: Homeobox protein ceh-24 (293 aa).

Basic and acidic residues-rich tracts occupy residues 1 to 15 and 22 to 38; these read MSEKESPSPQHKKDE and QETKDSEDDATKKMKIK. Disordered stretches follow at residues 1–38 and 203–256; these read MSEKESPSPQHKKDEVVDDTEQETKDSEDDATKKMKIK and EKEK…SNGV. The homeobox DNA-binding region spans 144–203; that stretch reads RRKRRVLFSQAQVYELERRFKQAKYLTAPEREQLANSIRLTPTQVKIWFQNHRYKCKRQE.

This sequence belongs to the NK-2 homeobox family. Expressed in the 8 vulval muscles, 8-10 ventral neurons in the head and in the most posterior pharyngeal muscle cell, m8.

The protein resides in the nucleus. In terms of biological role, probable transcriptional regulator that is required in neural development for the normal formation of sublateral cholinergic motor neuron processes. Plays a role in regulating the expression of acetylcholine transporter protein unc-17 in the sublateral processes. In particular, it is required in sublateral motor neurons for a left-right turning behavior that occurs during the lethargus phase of the normal sleep process called 'flipping'. During 'flipping' animals rotate 180 degrees about their longitudinal axis. This chain is Homeobox protein ceh-24, found in Caenorhabditis briggsae.